The primary structure comprises 60 residues: Myrmicitoxin(1)-Pr4b (60 aa).

An N-terminal signal peptide occupies residues 1–23; that stretch reads MKAIIFLFAVLTVVAIIIPIISG. A propeptide spanning residues 24 to 33 is cleaved from the precursor; sequence EPNAGPHAAS. Glutamine amide is present on Gln-59.

It belongs to the formicidae venom clade 2 family. As to expression, expressed by the venom gland.

Its subcellular location is the secreted. Functionally, toxin that causes a rapid and irreversible paralysis when intrathoracically injected into insects (blowflies). Does not cause spontaneous nocifensive behaviors by intraplantar injection in mice. This Pogonomyrmex rugosus (Desert harvester ant) protein is Myrmicitoxin(1)-Pr4b.